Reading from the N-terminus, the 162-residue chain is Nucleotide-binding protein CHU_2278 (162 aa).

Belongs to the YajQ family.

Its function is as follows. Nucleotide-binding protein. The protein is Nucleotide-binding protein CHU_2278 of Cytophaga hutchinsonii (strain ATCC 33406 / DSM 1761 / CIP 103989 / NBRC 15051 / NCIMB 9469 / D465).